A 545-amino-acid chain; its full sequence is Probable quinate permease (545 aa).

Residues 1–22 (MSILSLVEDRPTPKEVYNWRIY) lie on the Cytoplasmic side of the membrane. A helical membrane pass occupies residues 23–43 (LLAAVASFTSCMIGYDSAFIG). Residues 44 to 66 (TTISLQSFKDEFNWDAMSTDKQN) lie on the Extracellular side of the membrane. Residues 67-87 (LISANIVSLYQAGAFFGAFFA) traverse the membrane as a helical segment. Residues 88 to 97 (YPMGHFWGRR) lie on the Cytoplasmic side of the membrane. The helical transmembrane segment at 98–118 (WGLFVAALVFTLGAGLMLGAN) threads the bilayer. Residues 119 to 130 (GDRGLGLIYGGR) lie on the Extracellular side of the membrane. A helical transmembrane segment spans residues 131–151 (VLAGLGVGAGSNITPIYISEL). The Cytoplasmic portion of the chain corresponds to 152 to 159 (APPAIRGR). Residues 160–180 (LVGVYELGWQIGGLVGFWICF) form a helical membrane-spanning segment. The Extracellular segment spans residues 181–193 (GVDDTLAPSHKQW). The helical transmembrane segment at 194 to 214 (IIPFAVQLIPSGLLLLGILFV) threads the bilayer. Residues 215–285 (RESPRWLFLR…VWSNKRIMYR (71 aa)) lie on the Cytoplasmic side of the membrane. A helical transmembrane segment spans residues 286–306 (LFLGSMLFLWQNGSGINAINY). Topologically, residues 307-325 (YSPTVFKSIGLRGANTSLL) are extracellular. The chain crosses the membrane as a helical span at residues 326–346 (TTGIFGVVKTVVTFVWLLWLI). The Cytoplasmic portion of the chain corresponds to 347–352 (DRLGRR). The helical transmembrane segment at 353 to 373 (LLLMIGAAGGSVCLWIVGAYI) threads the bilayer. The Extracellular portion of the chain corresponds to 374–384 (KVAKPTERDPD). Residues 385–405 (APLDGGGIAAMFFFYLWTVFY) form a helical membrane-spanning segment. The Cytoplasmic segment spans residues 406–457 (TPSWNGTPWVMNSEMFDPNVRSLAQACAAGSNWLWNFLISRFTPQMFAKMEY). A helical membrane pass occupies residues 458–478 (GVYFFFASLMILSIVFVFFLI). Over 479 to 545 (PETKGIPLES…VEQAESVPKA (67 aa)) the chain is Extracellular. The tract at residues 520–545 (IEESGYTKSDAQQVERVEQAESVPKA) is disordered.

This sequence belongs to the major facilitator superfamily. Sugar transporter (TC 2.A.1.1) family. Interacts with creB. Post-translationally, ubiquitinated. Deubiquitinated by creB, probably to control its activity or amount.

It is found in the cell membrane. Its function is as follows. Integral membrane transporter that imports quinic acid to be catabolized as a carbon source. The chain is Probable quinate permease (qutD) from Aspergillus terreus (strain NIH 2624 / FGSC A1156).